Reading from the N-terminus, the 120-residue chain is Ribonuclease P protein component 4 (120 aa).

Cysteine 67, cysteine 70, cysteine 96, and cysteine 99 together coordinate Zn(2+).

It belongs to the eukaryotic/archaeal RNase P protein component 4 family. Consists of a catalytic RNA component and at least 4-5 protein subunits. It depends on Zn(2+) as a cofactor.

It is found in the cytoplasm. The enzyme catalyses Endonucleolytic cleavage of RNA, removing 5'-extranucleotides from tRNA precursor.. Part of ribonuclease P, a protein complex that generates mature tRNA molecules by cleaving their 5'-ends. In Thermococcus sibiricus (strain DSM 12597 / MM 739), this protein is Ribonuclease P protein component 4.